The sequence spans 388 residues: Succinate--CoA ligase [ADP-forming] subunit beta (388 aa).

Residues 9 to 236 form the ATP-grasp domain; sequence KKLFAEHGVP…VAAVDPLEQK (228 aa). ATP is bound by residues K45, 52–54, E91, S94, and E99; that span reads GRG. Positions 191 and 205 each coordinate Mg(2+). Substrate is bound by residues N256 and 318-320; that span reads GIT.

This sequence belongs to the succinate/malate CoA ligase beta subunit family. Heterotetramer of two alpha and two beta subunits. Requires Mg(2+) as cofactor.

The catalysed reaction is succinate + ATP + CoA = succinyl-CoA + ADP + phosphate. The enzyme catalyses GTP + succinate + CoA = succinyl-CoA + GDP + phosphate. Its pathway is carbohydrate metabolism; tricarboxylic acid cycle; succinate from succinyl-CoA (ligase route): step 1/1. Its function is as follows. Succinyl-CoA synthetase functions in the citric acid cycle (TCA), coupling the hydrolysis of succinyl-CoA to the synthesis of either ATP or GTP and thus represents the only step of substrate-level phosphorylation in the TCA. The beta subunit provides nucleotide specificity of the enzyme and binds the substrate succinate, while the binding sites for coenzyme A and phosphate are found in the alpha subunit. The protein is Succinate--CoA ligase [ADP-forming] subunit beta of Frankia casuarinae (strain DSM 45818 / CECT 9043 / HFP020203 / CcI3).